The following is a 1370-amino-acid chain: MPYSYTEKKRIRKSFAKREDVQNVPFLLATQLQSYLTFLQADTATSDRVNEGLQAAFSSIFPIVSHNGMARLEFVSYALGEPVFDVKECQQRGLTYASPLRAKVRLVLLDREVSKPTIKEVKEQEVYMGEIPLMTGTGSFVINGTERVIVSQLHRSPGVFFEHDRGKTHSSGKLLFSARVIPYRGSWLDFEFDPKDVLFFRVDRRRKMPVTILLKAIGMTPESILAHFFDFDNFELKSEGGMMEFVAERWKGEMARFDIADRDGKVIVEKDKRINAKHLRDLAAGGIQRVSVPEDFLYGRVLAKNIVDPDTGEVVAHANDEITESVLNAMRAANVRDIQTLYTNDLDRGPYISQTLRADETADQMAARVAIYRMMRPGEPPAEEAVEALFQRLFYSEETYDLSRVGRMKVNSRLGRGDDSTGPMTLTNEDILETIKVLVELRNGRGQIDDIDHLGNRRVRCVGELAENQFRAGLVRVERAVKERLGQAETENLMPHDLINSKPISAAIKEFFGSSQLSQFMDQTNPLSEITHKRRVSALGPGGLTRERAGFEVRDVHPTHYGRVCPIETPEGPNIGLINSMALYARLNEYGFLETPYRKIIDGKVSDQIDYLSAIEESHYVIAQANAALDDEGRFVDDLVACREAGETMLTAPGNVHYMDVAPSQIVSVAASLIPFLEHDDANRALMGANMQRQAVPCLRPEKPLVGTGVERTVAVDSGTTVQALRGGVVDHVDADRVVIRVNDEENVAGEVGVDIYNLIKYTRSNQNTNINQRPIVARGDKVAKGDVLADGASTDLGELALGQNMLIAFMPWNGYNFEDSILISERVVADDRYTSIHIEELTVVARDTKLGPEEITRDISNLAETQLNRLDDSGIVYIGAEVSADDVLVGKVTPKGETQLTPEEKLLRAIFGEKASDVKDTSLRVSSGMTGTVIDVQVFTREGIVRDKRAQSIIDDELRRYRQDLNDQLRIVENDQFDRIEKMLVGKAVNGGPRKLAKGATLTKAYLADLDRWQWFDIRLADEQHAVVLEQAKESLEQKRHQFDLAFEEKRKKLTQGDELPPGVLKMIKVYLAVKRRLQPGDKMAGRHGNKGVVSRITPVEDMPHMADGTPADIVLNPLGVPSRMNVGQVLEVHLGWAAKGVGYRIADMLRDERTAQAKSVRGYLEKVYNTTGSSAHIDSLTDEEVLELANNLKKGVPFATPVFDGATEEEIGKMLELAYPDDVAARMRLTASRSQAWLYDGRTGEQFERPVTIGYMHYLKLHHLVDDKMHARSTGPYSLVTQQPLGGKAQFGGQRFGEMEVWALEAYGASYTLQEMLTVKSDDITGRTKVYENIVKGDHVIDAGMPESFNVLVKEIRSLALDMDLERN.

This sequence belongs to the RNA polymerase beta chain family. As to quaternary structure, the RNAP catalytic core consists of 2 alpha, 1 beta, 1 beta' and 1 omega subunit. When a sigma factor is associated with the core the holoenzyme is formed, which can initiate transcription.

The enzyme catalyses RNA(n) + a ribonucleoside 5'-triphosphate = RNA(n+1) + diphosphate. Its function is as follows. DNA-dependent RNA polymerase catalyzes the transcription of DNA into RNA using the four ribonucleoside triphosphates as substrates. The sequence is that of DNA-directed RNA polymerase subunit beta from Bordetella parapertussis (strain 12822 / ATCC BAA-587 / NCTC 13253).